We begin with the raw amino-acid sequence, 900 residues long: Protein translocase subunit SecA (900 aa).

Residues Gln87, Gly105–Thr109, and Asp510 each bind ATP. The disordered stretch occupies residues Asp857 to Lys890. A compositionally biased stretch (low complexity) spans Asp860–Gly872. Zn(2+) is bound by residues Cys884, Cys886, Cys895, and His896.

Belongs to the SecA family. In terms of assembly, monomer and homodimer. Part of the essential Sec protein translocation apparatus which comprises SecA, SecYEG and auxiliary proteins SecDF-YajC and YidC. Zn(2+) serves as cofactor.

Its subcellular location is the cell inner membrane. The protein localises to the cytoplasm. The catalysed reaction is ATP + H2O + cellular proteinSide 1 = ADP + phosphate + cellular proteinSide 2.. Functionally, part of the Sec protein translocase complex. Interacts with the SecYEG preprotein conducting channel. Has a central role in coupling the hydrolysis of ATP to the transfer of proteins into and across the cell membrane, serving both as a receptor for the preprotein-SecB complex and as an ATP-driven molecular motor driving the stepwise translocation of polypeptide chains across the membrane. The protein is Protein translocase subunit SecA of Marinomonas sp. (strain MWYL1).